The following is a 450-amino-acid chain: Casein kinase 1-like protein 1 (450 aa).

Positions 9 to 278 (FRLGRKIGSG…LKRIFRDLFI (270 aa)) constitute a Protein kinase domain. ATP is bound by residues 15–23 (IGSGSFGEI) and Lys-38. The active-site Proton acceptor is Asp-128. The tract at residues 311 to 450 (AVGTSAALPP…LQVSDEHHPH (140 aa)) is disordered. Over residues 328 to 342 (YTGEEEGRPHMESSR) the composition is skewed to basic and acidic residues. Polar residues predominate over residues 349–365 (LDNSGNISNQPTSSSAR). Over residues 371 to 382 (SSSLFAQSAGSS) the composition is skewed to low complexity.

This sequence belongs to the protein kinase superfamily. CK1 Ser/Thr protein kinase family. Casein kinase I subfamily. As to quaternary structure, monomer. In terms of processing, autophosphorylated. Expressed in flowers.

The protein resides in the cytoplasm. It is found in the cell junction. Its subcellular location is the plasmodesma. The enzyme catalyses L-seryl-[protein] + ATP = O-phospho-L-seryl-[protein] + ADP + H(+). It catalyses the reaction L-threonyl-[protein] + ATP = O-phospho-L-threonyl-[protein] + ADP + H(+). Its function is as follows. Casein kinases are operationally defined by their preferential utilization of acidic proteins such as caseins as substrates. It can phosphorylate a large number of proteins. The chain is Casein kinase 1-like protein 1 from Arabidopsis thaliana (Mouse-ear cress).